The following is a 177-amino-acid chain: Protein SPMIP1 (177 aa).

The disordered stretch occupies residues 47–80 (SRLPRKLPTLLPQASVAPPPPASKTTPSKAPSPA).

The polypeptide is Protein SPMIP1 (Spmip1) (Mus musculus (Mouse)).